The sequence spans 166 residues: Large ribosomal subunit protein uL10 (166 aa).

The protein belongs to the universal ribosomal protein uL10 family. Part of the ribosomal stalk of the 50S ribosomal subunit. The N-terminus interacts with L11 and the large rRNA to form the base of the stalk. The C-terminus forms an elongated spine to which L12 dimers bind in a sequential fashion forming a multimeric L10(L12)X complex.

Functionally, forms part of the ribosomal stalk, playing a central role in the interaction of the ribosome with GTP-bound translation factors. The sequence is that of Large ribosomal subunit protein uL10 from Shewanella sediminis (strain HAW-EB3).